The chain runs to 609 residues: Aspartate--tRNA(Asp/Asn) ligase (609 aa).

Residue Glu-177 participates in L-aspartate binding. An aspartate region spans residues 201–204 (QLFK). Residue Arg-223 participates in L-aspartate binding. ATP is bound by residues 223 to 225 (RDE) and Gln-232. Residue His-461 coordinates L-aspartate. An ATP-binding site is contributed by Glu-499. Position 506 (Arg-506) interacts with L-aspartate. An ATP-binding site is contributed by 551-554 (GVDR).

It belongs to the class-II aminoacyl-tRNA synthetase family. Type 1 subfamily. As to quaternary structure, homodimer.

Its subcellular location is the cytoplasm. The enzyme catalyses tRNA(Asx) + L-aspartate + ATP = L-aspartyl-tRNA(Asx) + AMP + diphosphate. Functionally, aspartyl-tRNA synthetase with relaxed tRNA specificity since it is able to aspartylate not only its cognate tRNA(Asp) but also tRNA(Asn). Reaction proceeds in two steps: L-aspartate is first activated by ATP to form Asp-AMP and then transferred to the acceptor end of tRNA(Asp/Asn). This Synechococcus sp. (strain CC9605) protein is Aspartate--tRNA(Asp/Asn) ligase.